The primary structure comprises 189 residues: Cell division protein SepF (189 aa).

Residues 18–64 are disordered; sequence EVTDHEDVAKERPVKVQKTEQTPSQQQRKPERPQETVPPRRQHIKSD. The span at 22–35 shows a compositional bias: basic and acidic residues; sequence HEDVAKERPVKVQK.

This sequence belongs to the SepF family. Homodimer. Interacts with FtsZ.

It is found in the cytoplasm. Functionally, cell division protein that is part of the divisome complex and is recruited early to the Z-ring. Probably stimulates Z-ring formation, perhaps through the cross-linking of FtsZ protofilaments. Its function overlaps with FtsA. This is Cell division protein SepF from Streptococcus thermophilus (strain ATCC BAA-250 / LMG 18311).